Reading from the N-terminus, the 547-residue chain is Chaperonin GroEL 2 (547 aa).

ATP contacts are provided by residues 30–33, K51, 87–91, G415, 479–481, and D495; these read TLGP, DGTTT, and NAA. Residues 526-547 form a disordered region; it reads KEESAAPAGGGMGGMGGMGGMM. Gly residues predominate over residues 533-547; that stretch reads AGGGMGGMGGMGGMM.

It belongs to the chaperonin (HSP60) family. In terms of assembly, forms a cylinder of 14 subunits composed of two heptameric rings stacked back-to-back. Interacts with the co-chaperonin GroES.

The protein localises to the cytoplasm. It carries out the reaction ATP + H2O + a folded polypeptide = ADP + phosphate + an unfolded polypeptide.. In terms of biological role, together with its co-chaperonin GroES, plays an essential role in assisting protein folding. The GroEL-GroES system forms a nano-cage that allows encapsulation of the non-native substrate proteins and provides a physical environment optimized to promote and accelerate protein folding. This chain is Chaperonin GroEL 2, found in Anaeromyxobacter sp. (strain Fw109-5).